A 204-amino-acid polypeptide reads, in one-letter code: Threonylcarbamoyl-AMP synthase (204 aa).

Positions 10-204 (ADELDLVANY…KDLLAGHILR (195 aa)) constitute a YrdC-like domain.

This sequence belongs to the SUA5 family. TsaC subfamily.

It localises to the cytoplasm. The enzyme catalyses L-threonine + hydrogencarbonate + ATP = L-threonylcarbamoyladenylate + diphosphate + H2O. Functionally, required for the formation of a threonylcarbamoyl group on adenosine at position 37 (t(6)A37) in tRNAs that read codons beginning with adenine. Catalyzes the conversion of L-threonine, HCO(3)(-)/CO(2) and ATP to give threonylcarbamoyl-AMP (TC-AMP) as the acyladenylate intermediate, with the release of diphosphate. This is Threonylcarbamoyl-AMP synthase from Moraxella catarrhalis (strain BBH18).